We begin with the raw amino-acid sequence, 72 residues long: Translation initiation factor IF-1 (72 aa).

Positions 1-72 (MSKEDLIEFT…SKGRITFRFK (72 aa)) constitute an S1-like domain.

The protein belongs to the IF-1 family. As to quaternary structure, component of the 30S ribosomal translation pre-initiation complex which assembles on the 30S ribosome in the order IF-2 and IF-3, IF-1 and N-formylmethionyl-tRNA(fMet); mRNA recruitment can occur at any time during PIC assembly.

Its subcellular location is the cytoplasm. In terms of biological role, one of the essential components for the initiation of protein synthesis. Stabilizes the binding of IF-2 and IF-3 on the 30S subunit to which N-formylmethionyl-tRNA(fMet) subsequently binds. Helps modulate mRNA selection, yielding the 30S pre-initiation complex (PIC). Upon addition of the 50S ribosomal subunit IF-1, IF-2 and IF-3 are released leaving the mature 70S translation initiation complex. The polypeptide is Translation initiation factor IF-1 (Gluconobacter oxydans (strain 621H) (Gluconobacter suboxydans)).